The primary structure comprises 147 residues: MVHWTPEEKQYITSLWAKVNVEEVGGEALARLLIVYPWTQRFFSSFGNLSSASAILHNAKVLAHGKKVLTSFGDAVKNLDNIKKTFAQLSELHCEKLHVDPENFKLLGNILIIVLATRFPKEFTPASQAAWTKLVNAVAHALALGYH.

A Globin domain is found at 3–147 (HWTPEEKQYI…VAHALALGYH (145 aa)). Heme b contacts are provided by His-64 and His-93.

It belongs to the globin family. Heterotetramer of two alpha-D chains and two beta chains. As to expression, red blood cells.

Functionally, involved in oxygen transport from the lung to the various peripheral tissues. The sequence is that of Hemoglobin subunit beta (HBB) from Chelonoidis niger (Galapagos giant tortoise).